The following is a 188-amino-acid chain: Pyridoxal 5'-phosphate synthase subunit PdxT (188 aa).

46–48 (GES) contacts L-glutamine. Residue Cys78 is the Nucleophile of the active site. L-glutamine-binding positions include Arg106 and 132 to 133 (IR). Catalysis depends on charge relay system residues His169 and Glu171.

Belongs to the glutaminase PdxT/SNO family. In the presence of PdxS, forms a dodecamer of heterodimers. Only shows activity in the heterodimer.

The enzyme catalyses aldehydo-D-ribose 5-phosphate + D-glyceraldehyde 3-phosphate + L-glutamine = pyridoxal 5'-phosphate + L-glutamate + phosphate + 3 H2O + H(+). It carries out the reaction L-glutamine + H2O = L-glutamate + NH4(+). It participates in cofactor biosynthesis; pyridoxal 5'-phosphate biosynthesis. Its function is as follows. Catalyzes the hydrolysis of glutamine to glutamate and ammonia as part of the biosynthesis of pyridoxal 5'-phosphate. The resulting ammonia molecule is channeled to the active site of PdxS. This Tropheryma whipplei (strain TW08/27) (Whipple's bacillus) protein is Pyridoxal 5'-phosphate synthase subunit PdxT.